The following is a 382-amino-acid chain: MAPTQSKVRIHNLAEAHEKTLRAFPIEVEQNPEGKKLLVKQIRIRTLGHADHSNDSICFLNTYGFIKEAVSQTEFMRAGQKSESKNTLTACMLPFGPGPNIGSPQKMLEYAEDIKIHVRKTAGCKEQIVFSLDRTPQVFRGFQFPRDRYACVPSDKYIKSPGKLVAGPNYCYIITFLSLTFCPSSQKFKVPRPVLNFRSTRMRGIHLEIIMKITCSENSPIRKTLITDDLENGPKASVWIHLCNLYKGRNPIKIYDEAYFAEKCKQMLLSVGISDLWGPTIAVHANGKIPKSASLYFNSRGWALHPIADASPTMAKQLWSIGCEIMEVNAILQGSDYSALVDHPDVIYRKIRIDPAKKQYAHSKWNPFKKAISMPNLTDDSI.

The protein belongs to the morbillivirus/respirovirus/rubulavirus M protein family.

The protein localises to the virion. In terms of biological role, the M protein has a crucial role in virus assembly and interacts with the RNP complex as well as with the viral membrane. The polypeptide is Matrix protein (M) (Homo sapiens (Human)).